Reading from the N-terminus, the 150-residue chain is Ribonuclease H (150 aa).

The region spanning 1-142 (MSDSVELFTD…ADQLANRGVD (142 aa)) is the RNase H type-1 domain. Mg(2+)-binding residues include aspartate 10, glutamate 48, aspartate 70, and aspartate 134.

This sequence belongs to the RNase H family. Monomer. Mg(2+) is required as a cofactor.

Its subcellular location is the cytoplasm. The catalysed reaction is Endonucleolytic cleavage to 5'-phosphomonoester.. Functionally, endonuclease that specifically degrades the RNA of RNA-DNA hybrids. The sequence is that of Ribonuclease H from Pseudomonas syringae pv. syringae (strain B728a).